The chain runs to 373 residues: Glutamate 5-kinase (373 aa).

Lys15 is an ATP binding site. Residues Ser55, Asp142, and Asn154 each contribute to the substrate site. Residues 174–175 and 216–222 each bind ATP; these read TD and TGGMATK. Positions 281–359 constitute a PUA domain; that stretch reads AGRIIVDDGA…SRIEAILGYR (79 aa).

This sequence belongs to the glutamate 5-kinase family.

The protein localises to the cytoplasm. The catalysed reaction is L-glutamate + ATP = L-glutamyl 5-phosphate + ADP. The protein operates within amino-acid biosynthesis; L-proline biosynthesis; L-glutamate 5-semialdehyde from L-glutamate: step 1/2. In terms of biological role, catalyzes the transfer of a phosphate group to glutamate to form L-glutamate 5-phosphate. This is Glutamate 5-kinase from Pelobacter propionicus (strain DSM 2379 / NBRC 103807 / OttBd1).